A 926-amino-acid polypeptide reads, in one-letter code: LPS-assembly protein LptD (926 aa).

The signal sequence occupies residues 1-22; the sequence is MALKSPAFRKKFPLLVTGSLLA. Residues 55–91 form a disordered region; that stretch reads AAAVDLPPRPVHDTTSVSSNGTVTSQGTSSGEQSAGT. A compositionally biased stretch (low complexity) spans 68 to 91; it reads TTSVSSNGTVTSQGTSSGEQSAGT.

This sequence belongs to the LptD family. Component of the lipopolysaccharide transport and assembly complex. Interacts with LptE and LptA.

It localises to the cell outer membrane. Functionally, together with LptE, is involved in the assembly of lipopolysaccharide (LPS) at the surface of the outer membrane. This is LPS-assembly protein LptD from Pseudomonas syringae pv. syringae (strain B728a).